Consider the following 367-residue polypeptide: Lysophosphatidic acid receptor 5 (367 aa).

The Extracellular portion of the chain corresponds to 1-25; that stretch reads MQANSSAKSLPTECPDYQPIHHLHL. The N-linked (GlcNAc...) asparagine glycan is linked to Asn-4. A helical transmembrane segment spans residues 26-46; it reads VVYSVVLAAGLPLNALALWVF. Residues 47 to 54 lie on the Cytoplasmic side of the membrane; sequence LRALRVHS. The chain crosses the membrane as a helical span at residues 55–75; the sequence is VVSVYMCNLAASDLLFTLSLP. Over 76-95 the chain is Extracellular; that stretch reads LRLSYYARHYWPFPDFLCQL. A disulfide bond links Cys-93 and Cys-174. A helical membrane pass occupies residues 96–116; the sequence is AGAVFQMNMYGSCIFLTLINV. The Cytoplasmic segment spans residues 117–135; the sequence is DRYAAIVHPLRLRHLRRPR. A helical transmembrane segment spans residues 136-156; sequence VARLLCLGVWALILVFAVPTI. Topologically, residues 157–186 are extracellular; that stretch reads LAHQPSSCARDGRNVSLCFESFSDKLWKGS. An N-linked (GlcNAc...) asparagine glycan is attached at Asn-170. Residues 187-207 traverse the membrane as a helical segment; it reads LLPLLLLAEALGFLLPLAAVV. At 208-238 the chain is on the cytoplasmic side; that stretch reads YSSGRVFWTLARPDATRSQRRRKTVRLLLAS. The helical transmembrane segment at 239–259 threads the bilayer; it reads LVIFLLCFVPYNATLAVYGLL. Topologically, residues 260–275 are extracellular; that stretch reads RGEVVPASSEARKKVR. The chain crosses the membrane as a helical span at residues 276 to 296; the sequence is GVLMVMVLLAGANCVLDPLVY. The Cytoplasmic segment spans residues 297–367; that stretch reads YFSAEGFRNT…FTPSHEDSSF (71 aa). Residues 332-350 show a composition bias toward low complexity; sequence LTETAHASTLTTTSQGQLQ. Positions 332-367 are disordered; that stretch reads LTETAHASTLTTTSQGQLQPSDPRSSFTPSHEDSSF. Polar residues predominate over residues 351–360; that stretch reads PSDPRSSFTP.

Belongs to the G-protein coupled receptor 1 family.

The protein localises to the cell membrane. Receptor for lysophosphatidic acid (LPA), a mediator of diverse cellular activities. This Bos taurus (Bovine) protein is Lysophosphatidic acid receptor 5 (LPAR5).